Consider the following 371-residue polypeptide: Cytokine receptor-like factor 2 (371 aa).

The first 22 residues, 1–22, serve as a signal peptide directing secretion; sequence MGRLVLLWGAAVFLLGGWMALG. Residues 23-231 are Extracellular-facing; the sequence is QGGAAEGVQI…PTPPKPKLSK (209 aa). N-linked (GlcNAc...) asparagine glycans are attached at residues Asn-47 and Asn-55. A disulfide bond links Cys-71 and Cys-84. Residues Asn-101 and Asn-169 are each glycosylated (N-linked (GlcNAc...) asparagine). Residues 118–211 enclose the Fibronectin type-III domain; that stretch reads KPSSPKHVRF…DWSEVTCWQR (94 aa). Cys-180 and Cys-218 are disulfide-bonded. The short motif at 200 to 204 is the WSXWS motif element; it reads PSDWS. The chain crosses the membrane as a helical span at residues 232–252; the sequence is FILISSLAILLMVSLLLLSLW. The Cytoplasmic portion of the chain corresponds to 253-371; sequence KLWRVKKFLI…VMNDRSYVAL (119 aa). The Box 1 motif motif lies at 261 to 269; sequence LIPSVPDPK. Residues 322–336 show a composition bias toward basic and acidic residues; it reads ESPRMLDPQTEEKEA. Residues 322–347 form a disordered region; sequence ESPRMLDPQTEEKEASGGSLQLPHQP.

Belongs to the type I cytokine receptor family. Type 5 subfamily. Heterodimer of CRLF2 and IL7R. Expressed in heart, skeletal muscle, kidney and adult and fetal liver. Primarily expressed in dendrites and monocytes. Weakly expressed in T-cells.

It localises to the cell membrane. The protein localises to the secreted. Its function is as follows. Receptor for thymic stromal lymphopoietin (TSLP). Forms a functional complex with TSLP and IL7R which is capable of stimulating cell proliferation through activation of STAT3 and STAT5. Also activates JAK2. Implicated in the development of the hematopoietic system. This Homo sapiens (Human) protein is Cytokine receptor-like factor 2 (CRLF2).